The sequence spans 480 residues: uncharacterized protein (480 aa).

A DNA-binding region (zn(2)-C6 fungal-type) is located at residues 16–46 (CDRCRRRKIRCTGSDIPGQPCLACQKAHADC). Residues 298–307 (SFGASVSPKS) are compositionally biased toward low complexity. The interval 298–325 (SFGASVSPKSTPGSNSTGAAVDTNSVHS) is disordered. The segment covering 308-325 (TPGSNSTGAAVDTNSVHS) has biased composition (polar residues).

The protein resides in the cytoplasm. It localises to the nucleus. This is an uncharacterized protein from Schizosaccharomyces pombe (strain 972 / ATCC 24843) (Fission yeast).